The sequence spans 1263 residues: TBC1 domain family member 9B (1263 aa).

GRAM domains follow at residues 142 to 209 (LKMR…EKNA) and 288 to 356 (ECYR…EKAD). Threonine 397 carries the phosphothreonine modification. Residues 397–449 (TPSKQTGSSIGGTKASVSDPAPESLPTPQEASEPPASPSSPLSSPPSFSTQEI) form a disordered region. A phosphoserine mark is found at serine 412, serine 433, serine 436, and serine 464. A compositionally biased stretch (low complexity) spans 422–447 (PTPQEASEPPASPSSPLSSPPSFSTQ). The region spanning 509–696 (GIPESLRGEL…VIVDCFFYEG (188 aa)) is the Rab-GAP TBC domain. The chain crosses the membrane as a helical span at residues 669–689 (LSWFLTLFLSVMPFESAVVIV). An EF-hand domain is found at 880-915 (HTPVLAGRMFRLLDQNKDSLINFKEFVTGMSGMYHG). Disordered stretches follow at residues 977–1002 (EQQEGSGNEDTPERREEKGTSPPDYR), 1075–1126 (TTKK…SGDM), and 1139–1159 (VEGGSGEGQGSPSLLLSDDET). Positions 987 to 1002 (TPERREEKGTSPPDYR) are enriched in basic and acidic residues. Serine 1254 carries the post-translational modification Phosphoserine.

The protein resides in the membrane. May act as a GTPase-activating protein for Rab family protein(s). This is TBC1 domain family member 9B (Tbc1d9b) from Mus musculus (Mouse).